The primary structure comprises 99 residues: Integration host factor subunit alpha (99 aa).

Belongs to the bacterial histone-like protein family. In terms of assembly, heterodimer of an alpha and a beta chain.

In terms of biological role, this protein is one of the two subunits of integration host factor, a specific DNA-binding protein that functions in genetic recombination as well as in transcriptional and translational control. The sequence is that of Integration host factor subunit alpha from Nitrosococcus oceani (strain ATCC 19707 / BCRC 17464 / JCM 30415 / NCIMB 11848 / C-107).